The chain runs to 283 residues: Polyamine aminopropyltransferase (283 aa).

One can recognise a PABS domain in the interval Pro-5–Asp-238. S-methyl-5'-thioadenosine is bound at residue Gln-32. Residues His-63 and Asp-87 each contribute to the spermidine site. S-methyl-5'-thioadenosine contacts are provided by residues Glu-107 and Asp-139–Gly-140. Asp-158 functions as the Proton acceptor in the catalytic mechanism. Residue Asp-158 to Asp-161 coordinates spermidine.

This sequence belongs to the spermidine/spermine synthase family. As to quaternary structure, homodimer or homotetramer.

Its subcellular location is the cytoplasm. It carries out the reaction S-adenosyl 3-(methylsulfanyl)propylamine + putrescine = S-methyl-5'-thioadenosine + spermidine + H(+). Its pathway is amine and polyamine biosynthesis; spermidine biosynthesis; spermidine from putrescine: step 1/1. Catalyzes the irreversible transfer of a propylamine group from the amino donor S-adenosylmethioninamine (decarboxy-AdoMet) to putrescine (1,4-diaminobutane) to yield spermidine. This Prochlorococcus marinus subsp. pastoris (strain CCMP1986 / NIES-2087 / MED4) protein is Polyamine aminopropyltransferase.